We begin with the raw amino-acid sequence, 557 residues long: E3 ubiquitin-protein ligase rnf168 (557 aa).

Residues 16–55 (CPICQEILLEPVTLPCKHTLCNPCFQMTVEKASLCCPFCR) form an RING-type zinc finger. An LR motif 1 motif is present at residues 112 to 130 (LCQPGEIRQEYEAEVSKIE). Positions 145–153 (EDYIQKLLA) match the UMI motif motif. 2 consecutive short sequence motifs (MIU motif) follow at residues 170–193 (MEEQ…VSNA) and 422–445 (RRRQ…KELK). The LR motif 2 motif lies at 449-460 (RGKGSPDEYELR). The segment at 482–543 (PLRKEIPVQD…GINVLKPINK (62 aa)) is disordered. Residues 490 to 500 (QDNSRNTQSEY) are compositionally biased toward polar residues. The span at 508-521 (PSRKNSVRSARVRQ) shows a compositional bias: basic residues.

Belongs to the RNF168 family. In terms of assembly, monomer.

It localises to the nucleus. The enzyme catalyses S-ubiquitinyl-[E2 ubiquitin-conjugating enzyme]-L-cysteine + [acceptor protein]-L-lysine = [E2 ubiquitin-conjugating enzyme]-L-cysteine + N(6)-ubiquitinyl-[acceptor protein]-L-lysine.. It functions in the pathway protein modification; protein ubiquitination. E3 ubiquitin-protein ligase required for accumulation of repair proteins to sites of DNA damage. Acts with ube2n/ubc13 to amplify the rnf8-dependent histone ubiquitination. Recruited to sites of DNA damage at double-strand breaks (DSBs) by binding to ubiquitinated histone H2A and ubiquitinates histone H2A and H2AX, leading to amplify the rnf8-dependent H2A ubiquitination and promoting the formation of 'Lys-63'-linked ubiquitin conjugates. This leads to concentrate ubiquitinated histones H2A and H2AX at DNA lesions to the threshold required for recruitment of tp53bp1 and brca1. Catalyzes monoubiquitination of 'Lys-13' and 'Lys-15' of nucleosomal histone H2A (H2AK13Ub and H2AK15Ub, respectively). The chain is E3 ubiquitin-protein ligase rnf168 from Xenopus laevis (African clawed frog).